Here is a 455-residue protein sequence, read N- to C-terminus: Bleomycin hydrolase (455 aa).

The residue at position 1 (Met-1) is an N-acetylmethionine. Catalysis depends on residues Cys-73 and His-372. At Lys-391 the chain carries N6-acetyllysine. The active site involves Asn-396.

It belongs to the peptidase C1 family. Homohexamer. Interacts with NUDT12 (via ANK repeats).

It localises to the cytoplasm. Its subcellular location is the cytoplasmic granule. It carries out the reaction Inactivates bleomycin B2 (a cytotoxic glycometallopeptide) by hydrolysis of a carboxyamide bond of beta-aminoalanine, but also shows general aminopeptidase activity. The specificity varies somewhat with source, but amino acid arylamides of Met, Leu and Ala are preferred.. Its function is as follows. The normal physiological role of BLM hydrolase is unknown, but it catalyzes the inactivation of the antitumor drug BLM (a glycopeptide) by hydrolyzing the carboxamide bond of its B-aminoalaninamide moiety thus protecting normal and malignant cells from BLM toxicity. In Homo sapiens (Human), this protein is Bleomycin hydrolase (BLMH).